The primary structure comprises 348 residues: Rhodopsin (348 aa).

Met-1 is modified (N-acetylmethionine). The Extracellular segment spans residues 1-36 (MNGTEGPNFYVPFSNKTGVVRSPFEFPQYYLAEPWQ). Residues Asn-2 and Asn-15 are each glycosylated (N-linked (GlcNAc...) asparagine). A helical membrane pass occupies residues 37–61 (FSMLAAYMFLLIVLGFPINFLTLYV). Topologically, residues 62–73 (TVQHKKLRTPLN) are cytoplasmic. The chain crosses the membrane as a helical span at residues 74–96 (YILLNLAVADLFMVFGGFTTTLY). The Extracellular portion of the chain corresponds to 97–110 (TSLHGYFVFGPTGC). A disulfide bond links Cys-110 and Cys-187. A helical transmembrane segment spans residues 111–133 (NLEGFFATLGGEIALWSLVVLAI). The 'Ionic lock' involved in activated form stabilization motif lies at 134 to 136 (ERY). Residues 134 to 152 (ERYVVVCKPMSNFRFGENH) lie on the Cytoplasmic side of the membrane. A helical membrane pass occupies residues 153–173 (AIMGVGFTWVMALACAAPPLV). Residues 174 to 202 (GWSRYIPEGMQCSCGIDYYTLKPEVNNES) are Extracellular-facing. Residue Glu-201 participates in Zn(2+) binding. Residues 203 to 224 (FVIYMFVVHFTIPMIVIFFCYG) form a helical membrane-spanning segment. The Cytoplasmic segment spans residues 225-252 (QLVFTVKEAAAQQQESATTQKAEKEVTR). A helical membrane pass occupies residues 253–274 (MVIIMVIAFLICWVPYASVAFY). The Extracellular portion of the chain corresponds to 275-286 (IFTHQGSNFGPI). Gln-279 provides a ligand contact to Zn(2+). The helical transmembrane segment at 287-308 (FMTLPAFFAKAASIYNPVIYIM) threads the bilayer. N6-(retinylidene)lysine is present on Lys-296. Topologically, residues 309–348 (MNKQFRTCMITTLCCGKNPLGDDEVSASASKTETSQVAPA) are cytoplasmic. 2 S-palmitoyl cysteine lipidation sites follow: Cys-322 and Cys-323. Residues 330–348 (DDEVSASASKTETSQVAPA) are interaction with SAG. 2 positions are modified to phosphoserine: Ser-334 and Ser-338. Phosphothreonine occurs at positions 340 and 342. Phosphoserine is present on Ser-343.

Belongs to the G-protein coupled receptor 1 family. Opsin subfamily. As to quaternary structure, homodimer. May form a complex composed of RHO, GRK1 and RCVRN in a Ca(2+)-dependent manner; RCVRN prevents the interaction between GRK1 and RHO. Interacts with GRK1. Interacts (phosphorylated form) with SAG. Interacts with GNAT1. Interacts with GNAT3. SAG and G-proteins compete for a common binding site. Interacts with PRCD; the interaction promotes PRCD stability. Forms a complex with ASAP1 and ARF4. Forms a complex with ASAP1, RAB11A, Rabin8/RAB3IP, ARF4 and RAB11FIP3; the complex regulates Golgi-to-cilia rhodopsin/RHO transport in photoreceptors. Phosphorylated on some or all of the serine and threonine residues present in the C-terminal region. In terms of processing, contains one covalently linked retinal chromophore. Upon light absorption, the covalently bound 11-cis-retinal is converted to all-trans-retinal. After hydrolysis of the Schiff base and release of the covalently bound all-trans-retinal, active rhodopsin is regenerated by binding of a fresh molecule of 11-cis-retinal.

The protein resides in the membrane. The protein localises to the cell projection. It localises to the cilium. Its subcellular location is the photoreceptor outer segment. Functionally, photoreceptor required for image-forming vision at low light intensity. Required for photoreceptor cell viability after birth. Light-induced isomerization of 11-cis to all-trans retinal triggers a conformational change that activates signaling via G-proteins. Subsequent receptor phosphorylation mediates displacement of the bound G-protein alpha subunit by the arrestin SAG and terminates signaling. The protein is Rhodopsin (RHO) of Phoca vitulina (Harbor seal).